The chain runs to 344 residues: Transcription factor JunB (344 aa).

Glycyl lysine isopeptide (Lys-Gly) (interchain with G-Cter in SUMO2) cross-links involve residues Lys4, Lys33, and Lys36. The span at 51–65 (KGPGARGPGPEGSGA) shows a compositional bias: gly residues. The tract at residues 51-75 (KGPGARGPGPEGSGAGSYFSGQGSD) is disordered. Lys81 is covalently cross-linked (Glycyl lysine isopeptide (Lys-Gly) (interchain with G-Cter in SUMO2)). Phosphothreonine occurs at positions 102 and 104. Ser117 is modified (phosphoserine). Residue Lys138 forms a Glycyl lysine isopeptide (Lys-Gly) (interchain with G-Cter in SUMO2) linkage. 2 disordered regions span residues 181-202 (NLSS…VGTG) and 237-257 (KEEP…PVSP). The span at 183–192 (SSYSPASAPS) shows a compositional bias: low complexity. Lys237 is modified (N6-acetyllysine; alternate). Residue Lys237 forms a Glycyl lysine isopeptide (Lys-Gly) (interchain with G-Cter in SUMO1); alternate linkage. Residue Lys237 forms a Glycyl lysine isopeptide (Lys-Gly) (interchain with G-Cter in SUMO2); alternate linkage. A compositionally biased stretch (basic and acidic residues) spans 237–250 (KEEPQTVPEARSRD). Phosphoserine is present on Ser248. The residue at position 252 (Thr252) is a Phosphothreonine. The residue at position 256 (Ser256) is a Phosphoserine. The basic motif stretch occupies residues 265-292 (RIKVERKRLRNRLAATKCRKRKLERIAR). Positions 265–328 (RIKVERKRLR…AQLKQKVMTH (64 aa)) constitute a bZIP domain. The interval 293-321 (LEDKVKTLKAENAGLSSAAGLLREQVAQL) is leucine-zipper. Lys340 participates in a covalent cross-link: Glycyl lysine isopeptide (Lys-Gly) (interchain with G-Cter in SUMO2).

The protein belongs to the bZIP family. Jun subfamily. Binds DNA as a homodimer or as a heterodimer with another member of the Jun/Fos family. Component of an AP-1 transcription factor complex composed of JUN-FOS heterodimers. As part of the AP-1 transcription factor complex, forms heterodimers with FOSB, thereby binding to the AP-1 consensus sequence and stimulating transcription. Interacts with NFE2 (via its WW domains). In terms of processing, ubiquitinated by ITCH, leading to its degradation.

It is found in the nucleus. Its function is as follows. Transcription factor involved in regulating gene activity following the primary growth factor response. Binds to the DNA sequence 5'-TGA[GC]TCA-3'. Heterodimerizes with proteins of the FOS family to form an AP-1 transcription complex, thereby enhancing its DNA binding activity to an AP-1 consensus sequence 5'-TGA[GC]TCA-3' and enhancing its transcriptional activity. The chain is Transcription factor JunB (Junb) from Mus musculus (Mouse).